A 116-amino-acid chain; its full sequence is MSGSPPQLDPEIAARLKRTPDGLVPAIVQQYDTGEVLMLAWMDDEALRRTLTTRAATYWSRSRGEYWVKGATSGNTQRVVSVSLDCDGDTLLVKVDQTGGACHTGDRTCFDADRLL.

Asp-85 is a Mg(2+) binding site. Cys-86 lines the Zn(2+) pocket. Positions 87 and 89 each coordinate Mg(2+). 2 residues coordinate Zn(2+): Cys-102 and Cys-109.

The protein belongs to the PRA-CH family. In terms of assembly, homodimer. Mg(2+) serves as cofactor. Requires Zn(2+) as cofactor.

The protein localises to the cytoplasm. It carries out the reaction 1-(5-phospho-beta-D-ribosyl)-5'-AMP + H2O = 1-(5-phospho-beta-D-ribosyl)-5-[(5-phospho-beta-D-ribosylamino)methylideneamino]imidazole-4-carboxamide. The protein operates within amino-acid biosynthesis; L-histidine biosynthesis; L-histidine from 5-phospho-alpha-D-ribose 1-diphosphate: step 3/9. In terms of biological role, catalyzes the hydrolysis of the adenine ring of phosphoribosyl-AMP. This Thermobifida fusca (strain YX) protein is Phosphoribosyl-AMP cyclohydrolase.